The primary structure comprises 240 residues: MNIKTPSTPNNVDQQEIEKFEAIASRWWDLEGEFQPLHRINPLRLNYILQRSGGIFGKKVLDVGCGGGILSESMAREGADVTGLDMGTEPLQVARLHALETGIPVTYVQETVESHAEKYPQAYDIVTCMEMLEHVPDPQSVVHACAQLVKPGGHVFFSTINRNKKAWLMAVIGAEYILKMVPKGTHDAKKFIRPSELIGWIDRTSLREKHIIGLHYNPLTDKFSLGHNVDVNYMLHSQYV.

S-adenosyl-L-methionine contacts are provided by Arg-44, Gly-64, Asp-85, and Met-129.

The protein belongs to the methyltransferase superfamily. UbiG/COQ3 family.

It catalyses the reaction a 3-demethylubiquinol + S-adenosyl-L-methionine = a ubiquinol + S-adenosyl-L-homocysteine + H(+). The enzyme catalyses a 3-(all-trans-polyprenyl)benzene-1,2-diol + S-adenosyl-L-methionine = a 2-methoxy-6-(all-trans-polyprenyl)phenol + S-adenosyl-L-homocysteine + H(+). It functions in the pathway cofactor biosynthesis; ubiquinone biosynthesis. In terms of biological role, O-methyltransferase that catalyzes the 2 O-methylation steps in the ubiquinone biosynthetic pathway. In Photorhabdus laumondii subsp. laumondii (strain DSM 15139 / CIP 105565 / TT01) (Photorhabdus luminescens subsp. laumondii), this protein is Ubiquinone biosynthesis O-methyltransferase.